A 70-amino-acid chain; its full sequence is Small ribosomal subunit protein bS21 (70 aa).

Belongs to the bacterial ribosomal protein bS21 family.

The polypeptide is Small ribosomal subunit protein bS21 (Wolinella succinogenes (strain ATCC 29543 / DSM 1740 / CCUG 13145 / JCM 31913 / LMG 7466 / NCTC 11488 / FDC 602W) (Vibrio succinogenes)).